The following is a 373-amino-acid chain: Capsular polysaccharide phosphotransferase (373 aa).

This sequence belongs to the stealth family.

Part of a capsule gene locus. Expression was not detected under standard growth conditions. The polypeptide is Capsular polysaccharide phosphotransferase (Neisseria meningitidis serogroup B).